The following is a 528-amino-acid chain: Tyrosine--tRNA ligase, cytoplasmic (528 aa).

L-tyrosine is bound at residue Tyr39. The 'HIGH' region signature appears at 44-52 (TTGKPHVAY). Residues Tyr166, Gln170, Asp173, and Gln188 each coordinate L-tyrosine. Residues 222-226 (KMSSS) carry the 'KMSKS' region motif. A Nuclear localization signal motif is present at residues 242–247 (KKKLKK). The disordered stretch occupies residues 332 to 362 (EMKKLSNDAYPDASKQKSVPKGSTKNSGTEE). The tRNA-binding domain occupies 364 to 468 (DPSLLDLRVG…SGSAPGERIY (105 aa)).

The protein belongs to the class-I aminoacyl-tRNA synthetase family. As to quaternary structure, homodimer.

The protein localises to the cytoplasm. The protein resides in the nucleus. It carries out the reaction tRNA(Tyr) + L-tyrosine + ATP = L-tyrosyl-tRNA(Tyr) + AMP + diphosphate + H(+). In terms of biological role, catalyzes the attachment of tyrosine to tRNA(Tyr) in a two-step reaction: tyrosine is first activated by ATP to form Tyr-AMP and then transferred to the acceptor end of tRNA(Tyr). The polypeptide is Tyrosine--tRNA ligase, cytoplasmic (yars1) (Xenopus laevis (African clawed frog)).